The chain runs to 204 residues: Protein XpaC (204 aa).

In terms of biological role, in double copy it causes aberrant cell morphology, filamentation and inhibits sporulation. Hydrolyzes 5-bromo-4-chloroindolyl phosphate. The chain is Protein XpaC (xpaC) from Bacillus subtilis (strain 168).